The primary structure comprises 286 residues: UDP-3-O-acyl-N-acetylglucosamine deacetylase (286 aa).

Positions 79, 237, and 241 each coordinate Zn(2+). H264 (proton donor) is an active-site residue.

It belongs to the LpxC family. The cofactor is Zn(2+).

The catalysed reaction is a UDP-3-O-[(3R)-3-hydroxyacyl]-N-acetyl-alpha-D-glucosamine + H2O = a UDP-3-O-[(3R)-3-hydroxyacyl]-alpha-D-glucosamine + acetate. It participates in glycolipid biosynthesis; lipid IV(A) biosynthesis; lipid IV(A) from (3R)-3-hydroxytetradecanoyl-[acyl-carrier-protein] and UDP-N-acetyl-alpha-D-glucosamine: step 2/6. In terms of biological role, catalyzes the hydrolysis of UDP-3-O-myristoyl-N-acetylglucosamine to form UDP-3-O-myristoylglucosamine and acetate, the committed step in lipid A biosynthesis. The protein is UDP-3-O-acyl-N-acetylglucosamine deacetylase of Chlamydia trachomatis serovar L2 (strain ATCC VR-902B / DSM 19102 / 434/Bu).